Consider the following 204-residue polypeptide: MKRLVTGLLALSLFLAACGQDSDQQKDSNKEKDDKAKTEQQDKKTNDSSKDKKDNKDDSKDVNKDNKDNSANDNQQQSNSNATNNDQNQTNNNQSSNNQKSSYVAPYYGQNAAPVARQIYPFNGNKTQALQQLPNFQTALNAANNEANKFGSNNKVYNDYSIEEHNGNYKYVFSFKDPNANGKYSIVTVDYTGQAMVTDPNYQQ.

An N-terminal signal peptide occupies residues 1 to 17; that stretch reads MKRLVTGLLALSLFLAA. The segment at 17–102 is disordered; sequence ACGQDSDQQK…NQSSNNQKSS (86 aa). C18 is lipidated: N-palmitoyl cysteine. C18 is lipidated: S-diacylglycerol cysteine. The span at 23 to 70 shows a compositional bias: basic and acidic residues; sequence DQQKDSNKEKDDKAKTEQQDKKTNDSSKDKKDNKDDSKDVNKDNKDNS. Over residues 71 to 102 the composition is skewed to low complexity; the sequence is ANDNQQQSNSNATNNDQNQTNNNQSSNNQKSS.

Its subcellular location is the cell membrane. This is an uncharacterized protein from Staphylococcus aureus (strain Mu50 / ATCC 700699).